We begin with the raw amino-acid sequence, 142 residues long: Transcriptional regulator MraZ (142 aa).

2 SpoVT-AbrB domains span residues 5-51 and 77-120; these read ASAL…PRPE and AMDV…DSQT.

It belongs to the MraZ family. In terms of assembly, forms oligomers.

Its subcellular location is the cytoplasm. It is found in the nucleoid. This is Transcriptional regulator MraZ from Burkholderia cenocepacia (strain HI2424).